The chain runs to 98 residues: NADH-ubiquinone oxidoreductase chain 4L (98 aa).

The next 3 membrane-spanning stretches (helical) occupy residues 1–21, 29–49, and 58–78; these read MTPV…GLAF, ALLC…LWAL, and VAPM…LALL.

Belongs to the complex I subunit 4L family.

It is found in the mitochondrion membrane. The enzyme catalyses a ubiquinone + NADH + 5 H(+)(in) = a ubiquinol + NAD(+) + 4 H(+)(out). In terms of biological role, core subunit of the mitochondrial membrane respiratory chain NADH dehydrogenase (Complex I) which catalyzes electron transfer from NADH through the respiratory chain, using ubiquinone as an electron acceptor. Part of the enzyme membrane arm which is embedded in the lipid bilayer and involved in proton translocation. The polypeptide is NADH-ubiquinone oxidoreductase chain 4L (MT-ND4L) (Oncorhynchus clarkii (Cutthroat trout)).